Here is a 291-residue protein sequence, read N- to C-terminus: Pantothenate synthetase (291 aa).

ATP is bound at residue methionine 30–histidine 37. The Proton donor role is filled by histidine 37. Glutamine 61 serves as a coordination point for (R)-pantoate. Residue glutamine 61 participates in beta-alanine binding. Glycine 147–aspartate 150 provides a ligand contact to ATP. Glutamine 153 contacts (R)-pantoate. ATP contacts are provided by residues valine 176 and leucine 184–arginine 187.

The protein belongs to the pantothenate synthetase family. Homodimer.

It localises to the cytoplasm. It carries out the reaction (R)-pantoate + beta-alanine + ATP = (R)-pantothenate + AMP + diphosphate + H(+). It functions in the pathway cofactor biosynthesis; (R)-pantothenate biosynthesis; (R)-pantothenate from (R)-pantoate and beta-alanine: step 1/1. Functionally, catalyzes the condensation of pantoate with beta-alanine in an ATP-dependent reaction via a pantoyl-adenylate intermediate. This chain is Pantothenate synthetase, found in Koribacter versatilis (strain Ellin345).